Here is a 368-residue protein sequence, read N- to C-terminus: Glutaminyl-peptide cyclotransferase (368 aa).

The signal sequence occupies residues 1 to 33; the sequence is MARERRDSKAATFFCLAWALCLALPGFPQHVSG. N-linked (GlcNAc...) asparagine glycosylation is present at Asn53. A disulfide bond links Cys143 and Cys169. Asp164 lines the Zn(2+) pocket. The Proton acceptor role is filled by Glu207. Glu208 contacts Zn(2+). Residue Asp254 is the Proton acceptor of the active site. Asn292 carries N-linked (GlcNAc...) asparagine glycosylation. His336 serves as a coordination point for Zn(2+). The N-linked (GlcNAc...) asparagine glycan is linked to Asn352.

The protein belongs to the glutaminyl-peptide cyclotransferase family. Expressed by the venom gland.

The protein localises to the secreted. The enzyme catalyses N-terminal L-glutaminyl-[peptide] = N-terminal 5-oxo-L-prolyl-[peptide] + NH4(+). In terms of biological role, responsible for the biosynthesis of pyroglutamyl peptides. Has a bias against acidic and tryptophan residues adjacent to the N-terminal glutaminyl residue and a lack of importance of chain length after the second residue. Also catalyzes N-terminal pyroglutamate formation. The polypeptide is Glutaminyl-peptide cyclotransferase (QPCT) (Gloydius blomhoffii (Mamushi)).